The sequence spans 766 residues: Discoidin domain-containing receptor A (766 aa).

The N-terminal stretch at 1 to 18 is a signal peptide; the sequence is MQIALVLLAIYGTTTTNT. Over 19-372 the chain is Extracellular; it reads LRIDQCGENA…PPSSAATQQL (354 aa). F5/8 type C domains are found at residues 24–180 and 195–351; these read CGEN…IHGC and SRLD…FTSA. Residues cysteine 24 and cysteine 180 are joined by a disulfide bond. Asparagine 87, asparagine 103, asparagine 129, asparagine 242, asparagine 268, asparagine 311, and asparagine 353 each carry an N-linked (GlcNAc...) asparagine glycan. The helical transmembrane segment at 373–393 threads the bilayer; it reads LVVCGIIFLTIFACVAYCVSV. The Cytoplasmic portion of the chain corresponds to 394–766; the sequence is CLKRRQKNKS…FERLVKPFQD (373 aa). Residues 475-501 are disordered; sequence NFPPPPEGREEHTYSQPVSPENSSNGS. Positions 488–501 are enriched in polar residues; sequence YSQPVSPENSSNGS. A Protein kinase domain is found at 519-766; the sequence is LLIGKAIGEG…FERLVKPFQD (248 aa). Residues 525–533 and lysine 547 each bind ATP; that span reads IGEGKFTMI.

Belongs to the protein kinase superfamily. Tyr protein kinase family. Insulin receptor subfamily. As to expression, expressed in neurons in head and tail, some motoneurons in ventral nerve cord, in PVP interneurons, pharynx and stomato-intestinal muscle.

The protein localises to the cell membrane. Its subcellular location is the cell projection. It is found in the axon. It localises to the perikaryon. Functionally, receptor which, together with svh-4, is involved in axon guidance to establish the tracts for the ventral and dorsal nerve cords during nervous system development. May play a role in axon regeneration following injury in D-type motor neurons. The protein is Discoidin domain-containing receptor A of Caenorhabditis elegans.